Consider the following 706-residue polypeptide: Translation initiation factor IF-2 (706 aa).

The segment at 55-117 (KEVNSDSNQE…PTMKDEKGLI (63 aa)) is disordered. Residues 67–81 (VNTDDKLDKIDKPNK) are compositionally biased toward basic and acidic residues. The span at 93 to 108 (KNKKSKKKQKNKKKGP) shows a compositional bias: basic residues. Positions 208–375 (SRPPVVTVMG…MILLVSEVEE (168 aa)) constitute a tr-type G domain. The interval 217–224 (GHVDHGKT) is G1. 217 to 224 (GHVDHGKT) contributes to the GTP binding site. The interval 242–246 (GITQH) is G2. The tract at residues 263-266 (DTPG) is G3. GTP-binding positions include 263-267 (DTPGH) and 317-320 (NKID). Residues 317-320 (NKID) form a G4 region. A G5 region spans residues 353–355 (SAI).

This sequence belongs to the TRAFAC class translation factor GTPase superfamily. Classic translation factor GTPase family. IF-2 subfamily.

The protein localises to the cytoplasm. In terms of biological role, one of the essential components for the initiation of protein synthesis. Protects formylmethionyl-tRNA from spontaneous hydrolysis and promotes its binding to the 30S ribosomal subunits. Also involved in the hydrolysis of GTP during the formation of the 70S ribosomal complex. This Alkaliphilus metalliredigens (strain QYMF) protein is Translation initiation factor IF-2.